The following is an 830-amino-acid chain: Adhesion G protein-coupled receptor E2 (830 aa).

An N-terminal signal peptide occupies residues 1–22 (MRHGHPRLLPGLLMLLLLPLGA). The Extracellular portion of the chain corresponds to 23 to 540 (AAQKTSGCAR…MAHYDVQEED (518 aa)). The region spanning 26 to 68 (KTSGCARWCPPKSTCVNATTCRCSPGFSSLSGEIFSSPLESCD) is the EGF-like 1 domain. 5 cysteine pairs are disulfide-bonded: Cys30-Cys40, Cys34-Cys46, Cys48-Cys67, Cys73-Cys87, and Cys81-Cys96. N-linked (GlcNAc...) asparagine glycosylation occurs at Asn42. Positions 69-108 (DIDECGPPPLVSCGRLADCQNTEGSYHCMCSPGYALASGA) constitute an EGF-like 1; calcium-binding domain. N-linked (GlcNAc...) asparagine glycosylation is present at Asn113. The EGF-like 2; calcium-binding domain maps to 121–159 (DVDECQLKPRVCKSRGICTNTKGSYTCKCPPGFELNLGD). Cystine bridges form between Cys125-Cys138, Cys132-Cys147, Cys169-Cys182, Cys176-Cys191, Cys218-Cys231, and Cys225-Cys240. In terms of domain architecture, EGF-like 3; calcium-binding spans 165–203 (DVNECTSGQNPCHNSTHCLNNIGGYECRCRPGWKPVPGS). Asn178 is a glycosylation site (N-linked (GlcNAc...) asparagine). The EGF-like 4; calcium-binding domain maps to 214–253 (DVDECSSGKHTCHYSTVCINTVGSYKCRCRRGWKPKPRFQ). Asn258, Asn348, Asn361, and Asn379 each carry an N-linked (GlcNAc...) asparagine glycan. One can recognise a GAIN-B domain in the interval 358–537 (WTFNASAGTD…AVLMAHYDVQ (180 aa)). 2 disulfide bridges follow: Cys489–Cys519 and Cys507–Cys521. A GPS region spans residues 489 to 537 (CVFWEHSQDECGHWSTRGCTVVDSGDTSTTCQCTHLSSFAVLMAHYDVQ). A helical transmembrane segment spans residues 541–561 (LVLPVITYVGLGLSLLCLLLA). Over 562 to 576 (ALTFLLCKAIQNTST) the chain is Cytoplasmic. Residues 577-597 (SLHLQLLICLFLAHLLFLMAI) traverse the membrane as a helical segment. Residues 598-603 (DRTEIK) are Extracellular-facing. A helical transmembrane segment spans residues 604–624 (VLCSIIAGALHYLYLASFTWM). Over 625-651 (LLEGLHLFLTARNLMVVNYSSVSMLMK) the chain is Cytoplasmic. Residues 652–672 (KLMYPVGYGVPTLIVAISAAS) form a helical membrane-spanning segment. Topologically, residues 673 to 690 (RSHLYGTRTRCWLNPEER) are extracellular. A helical transmembrane segment spans residues 691–711 (FIWSFLGPVCTIFSVNLGFFL). Residues 712 to 744 (MTLWILKSKLSSLNSDVSTLQNTRMLTFKAIAQ) are Cytoplasmic-facing. A helical transmembrane segment spans residues 745 to 765 (LFILGCTWCLGILQVGPAAHV). Residues 766 to 767 (MA) are Extracellular-facing. Residues 768–788 (YLFTIINSLQGVFIFLVYCLL) form a helical membrane-spanning segment. Topologically, residues 789-830 (SQQVREEYGKWFKGIRKTRAESEKYTLSSRAMSDVNKPMMVN) are cytoplasmic.

This sequence belongs to the G-protein coupled receptor 2 family. Adhesion G-protein coupled receptor (ADGR) subfamily. As to quaternary structure, forms a heterodimer, consisting of a large extracellular region non-covalently linked to a seven-transmembrane moiety. Interacts with chondroitin sulfate; the interaction with chondroitin sulfate is calcium-dependent. Interacts with CD55. Post-translationally, autoproteolytically cleaved into 2 subunits, an extracellular alpha subunit and a seven-transmembrane beta subunit.

It localises to the cell membrane. It is found in the cell projection. Its subcellular location is the ruffle membrane. In terms of biological role, cell surface receptor that binds to the chondroitin sulfate moiety of glycosaminoglycan chains and promotes cell attachment. Promotes granulocyte chemotaxis, degranulation and adhesion. In macrophages, promotes the release of inflammatory cytokines, including IL8 and TNF. Signals probably through G-proteins. The protein is Adhesion G protein-coupled receptor E2 (ADGRE2) of Canis lupus familiaris (Dog).